The primary structure comprises 132 residues: Small ribosomal subunit protein uS8 (132 aa).

Belongs to the universal ribosomal protein uS8 family. As to quaternary structure, part of the 30S ribosomal subunit. Contacts proteins S5 and S12.

Its function is as follows. One of the primary rRNA binding proteins, it binds directly to 16S rRNA central domain where it helps coordinate assembly of the platform of the 30S subunit. The polypeptide is Small ribosomal subunit protein uS8 (Rhizobium meliloti (strain 1021) (Ensifer meliloti)).